The primary structure comprises 445 residues: Canavalin (445 aa).

The signal sequence occupies residues 1-26 (MAFSARFPLWLLLGVVLLASVSASFA). 2 consecutive Cupin type-1 domains span residues 49–207 (YLFR…DEIE) and 249–407 (FNLR…EEVE).

This sequence belongs to the 7S seed storage protein family. As to quaternary structure, homotrimer.

Functionally, seed storage protein. This is Canavalin from Canavalia gladiata (Sword bean).